The following is a 544-amino-acid chain: Chaperonin GroEL (544 aa).

ATP-binding positions include 30–33 (TLGP), Lys-51, 87–91 (DGTTT), Gly-415, 479–481 (NAA), and Asp-495.

The protein belongs to the chaperonin (HSP60) family. In terms of assembly, forms a cylinder of 14 subunits composed of two heptameric rings stacked back-to-back. Interacts with the co-chaperonin GroES.

It localises to the cytoplasm. It catalyses the reaction ATP + H2O + a folded polypeptide = ADP + phosphate + an unfolded polypeptide.. In terms of biological role, together with its co-chaperonin GroES, plays an essential role in assisting protein folding. The GroEL-GroES system forms a nano-cage that allows encapsulation of the non-native substrate proteins and provides a physical environment optimized to promote and accelerate protein folding. In Francisella tularensis subsp. novicida (strain U112), this protein is Chaperonin GroEL.